A 161-amino-acid polypeptide reads, in one-letter code: Phosphohistidine phosphatase SixA (161 aa).

This sequence belongs to the SixA phosphatase family.

Its function is as follows. Exhibits phosphohistidine phosphatase activity towards the HPt domain of the ArcB sensor involved in the multistep His-Asp phosphorelay. The protein is Phosphohistidine phosphatase SixA (sixA) of Escherichia coli (strain K12).